We begin with the raw amino-acid sequence, 438 residues long: Death-associated inhibitor of apoptosis 1 (438 aa).

One copy of the BIR 1 repeat lies at 44–110 (EETRLKTFTD…QRWSPNCPLL (67 aa)). The tract at residues 194-213 (TATQATGDVQPETCRPSAAS) is disordered. The stretch at 226 to 293 (ETARLRTFEA…ALWLSQCRFV (68 aa)) is one BIR 2 repeat. Zn(2+)-binding residues include cysteine 263, cysteine 266, histidine 283, and cysteine 290. The interval 322-346 (GGVAVASTQASEEEQQTSLSSEEAV) is disordered. The segment covering 327–345 (ASTQASEEEQQTSLSSEEA) has biased composition (low complexity). Residues 391–426 (CKICYGAEYNTAFLPCGHVVACAKCASSVTKCPLCR) form an RING-type zinc finger.

This sequence belongs to the IAP family. In terms of assembly, interacts (via BIR 2 domain) with Dronc (via residues 114-125). Rpr, hid and grim can outcompete Dronc for binding Diap1 therefore removing Diap1-mediated ubiquitination. Interacts (via BIR 2 domain) with HtrA2; this displaces any bound Dronc. Interacts with Strica. The N-terminally cleaved form interacts with Ubr3 (via UBR-type zinc finger); the interaction promotes the recruitment and uniquitination of substrate capases such as Dronc. Post-translationally, ubiquitinated and degraded by HtrA2 in apoptotic cells; proteolytic cleavage at specific sites in the BIR domain linker region generating inactive fragments. Mutation of one site reduces but does not abolish cleavage as another site is selected by the protease.

It carries out the reaction S-ubiquitinyl-[E2 ubiquitin-conjugating enzyme]-L-cysteine + [acceptor protein]-L-lysine = [E2 ubiquitin-conjugating enzyme]-L-cysteine + N(6)-ubiquitinyl-[acceptor protein]-L-lysine.. Its function is as follows. Anti-apoptotic protein which functions as a caspase regulator, using its E3 ubiquitin-protein ligase activity to smother caspase activity. Binds, ubiquitinates and inactivates initiator caspase Dronc, and effector caspases Drice and Dcp-1. Acts as a Nedd8-E3 ubiquitin-protein ligase for Drice. Suppresses apoptosis by targeting the apoptosome for ubiquitination and inactivation. Plays an important role in cell motility. Overexpression suppresses rpr and hid-dependent cell death in the eye. Interaction of Diap1 with Dronc is required to suppress Dronc-mediated cell death through Diap1-mediated ubiquitination of Dronc. Acts as a positive regulator of Wnt signaling. In Drosophila melanogaster (Fruit fly), this protein is Death-associated inhibitor of apoptosis 1 (Diap1).